The chain runs to 107 residues: Large ribosomal subunit protein uL24 (107 aa).

This sequence belongs to the universal ribosomal protein uL24 family. In terms of assembly, part of the 50S ribosomal subunit.

In terms of biological role, one of two assembly initiator proteins, it binds directly to the 5'-end of the 23S rRNA, where it nucleates assembly of the 50S subunit. Functionally, one of the proteins that surrounds the polypeptide exit tunnel on the outside of the subunit. This Malacoplasma penetrans (strain HF-2) (Mycoplasma penetrans) protein is Large ribosomal subunit protein uL24.